A 785-amino-acid chain; its full sequence is Protein SEY1 (785 aa).

The Cytoplasmic portion of the chain corresponds to 1-690; the sequence is MTDLEVSAIQ…KRSVINSKTE (690 aa). Residues 40 to 266 enclose the GB1/RHD3-type G domain; it reads GLNYHIVSVF…SEDQLFNEGY (227 aa). 50 to 57 contacts GTP; the sequence is GSQSTGKS. The stretch at 451 to 479 forms a coiled coil; sequence PKLRELEEELSNLRTELVNKEQENIKTKI. The chain crosses the membrane as a helical span at residues 691–711; sequence VPLYIYALLLVLGWNEFMIIL. Residues 712–714 are Lumenal-facing; sequence RNP. Residues 715-735 form a helical membrane-spanning segment; sequence LLITLLLIGLTGLYLGYKTKL. At 736-785 the chain is on the cytoplasmic side; that stretch reads LGPIVQVVQAMIQELQDQAKNKLRDVLVSEPEAPSQVRIGKEVDATKDED.

This sequence belongs to the TRAFAC class dynamin-like GTPase superfamily. GB1/RHD3 GTPase family. RHD3 subfamily.

It localises to the endoplasmic reticulum membrane. Cooperates with the reticulon proteins and tubule-shaping DP1 family proteins to generate and maintain the structure of the tubular endoplasmic reticulum network. Has GTPase activity, which is required for its function in ER organization. This is Protein SEY1 from Komagataella phaffii (strain GS115 / ATCC 20864) (Yeast).